A 184-amino-acid chain; its full sequence is UPF0301 protein Sden_2674 (184 aa).

This sequence belongs to the UPF0301 (AlgH) family.

The polypeptide is UPF0301 protein Sden_2674 (Shewanella denitrificans (strain OS217 / ATCC BAA-1090 / DSM 15013)).